Here is a 461-residue protein sequence, read N- to C-terminus: Bifunctional protein HldE (461 aa).

The segment at 1–311 (MKKILVVGDL…EEIALILNQT (311 aa)) is ribokinase. ATP is bound at residue 191 to 194 (NRAE). Asp-260 is a catalytic residue. The interval 332–461 (FTNGCFDLLH…IEKIKRTHND (130 aa)) is cytidylyltransferase.

It in the N-terminal section; belongs to the carbohydrate kinase PfkB family. This sequence in the C-terminal section; belongs to the cytidylyltransferase family. Homodimer.

It carries out the reaction D-glycero-beta-D-manno-heptose 7-phosphate + ATP = D-glycero-beta-D-manno-heptose 1,7-bisphosphate + ADP + H(+). The catalysed reaction is D-glycero-beta-D-manno-heptose 1-phosphate + ATP + H(+) = ADP-D-glycero-beta-D-manno-heptose + diphosphate. Its pathway is nucleotide-sugar biosynthesis; ADP-L-glycero-beta-D-manno-heptose biosynthesis; ADP-L-glycero-beta-D-manno-heptose from D-glycero-beta-D-manno-heptose 7-phosphate: step 1/4. It functions in the pathway nucleotide-sugar biosynthesis; ADP-L-glycero-beta-D-manno-heptose biosynthesis; ADP-L-glycero-beta-D-manno-heptose from D-glycero-beta-D-manno-heptose 7-phosphate: step 3/4. Catalyzes the phosphorylation of D-glycero-D-manno-heptose 7-phosphate at the C-1 position to selectively form D-glycero-beta-D-manno-heptose-1,7-bisphosphate. Functionally, catalyzes the ADP transfer from ATP to D-glycero-beta-D-manno-heptose 1-phosphate, yielding ADP-D-glycero-beta-D-manno-heptose. The protein is Bifunctional protein HldE of Helicobacter pylori (strain P12).